Here is a 365-residue protein sequence, read N- to C-terminus: 3-dehydroquinate synthase (365 aa).

Residues 106–110 (GVIGD), 130–131 (TT), Lys-142, Lys-151, and 169–172 (FFAT) each bind NAD(+). 3 residues coordinate Zn(2+): Glu-184, His-247, and His-264.

The protein belongs to the sugar phosphate cyclases superfamily. Dehydroquinate synthase family. The cofactor is NAD(+). Co(2+) is required as a cofactor. Requires Zn(2+) as cofactor.

It is found in the cytoplasm. The catalysed reaction is 7-phospho-2-dehydro-3-deoxy-D-arabino-heptonate = 3-dehydroquinate + phosphate. It participates in metabolic intermediate biosynthesis; chorismate biosynthesis; chorismate from D-erythrose 4-phosphate and phosphoenolpyruvate: step 2/7. In terms of biological role, catalyzes the conversion of 3-deoxy-D-arabino-heptulosonate 7-phosphate (DAHP) to dehydroquinate (DHQ). The protein is 3-dehydroquinate synthase of Listeria monocytogenes serotype 4b (strain F2365).